Reading from the N-terminus, the 87-residue chain is U3-theraphotoxin-Hhn1m (87 aa).

An N-terminal signal peptide occupies residues 1–24; sequence MVNMKASMFLTFAGLVLLFVVCYA. A propeptide spanning residues 25-52 is cleaved from the precursor; the sequence is SESEEKEFPKEMLSSIFAVDNDFKQEER. 3 disulfide bridges follow: Cys54–Cys67, Cys61–Cys72, and Cys66–Cys79.

This sequence belongs to the neurotoxin 10 (Hwtx-1) family. 51 (Hntx-8) subfamily. Hntx-8 sub-subfamily. In terms of tissue distribution, expressed by the venom gland.

It localises to the secreted. Ion channel inhibitor. This is U3-theraphotoxin-Hhn1m from Cyriopagopus hainanus (Chinese bird spider).